Here is a 282-residue protein sequence, read N- to C-terminus: Probable xyloglucan endotransglucosylase/hydrolase protein 18 (282 aa).

Residues 1-26 form the signal peptide; that stretch reads MKLSCGTSFAFLIMFLFAAQSMHVYA. A GH16 domain is found at 27–218; it reads GSFHKDVQIH…WSKAPFTAFY (192 aa). Glutamate 104 functions as the Nucleophile in the catalytic mechanism. Glutamate 108 (proton donor) is an active-site residue. Glutamate 108 contacts xyloglucan. N-linked (GlcNAc...) asparagine glycosylation occurs at asparagine 112. Xyloglucan is bound by residues 121–123, 131–133, 197–198, and glycine 202; these read HTN, DKE, and HW. Cysteine 226 and cysteine 235 form a disulfide bridge. An N-linked (GlcNAc...) asparagine glycan is attached at asparagine 238. A disulfide bridge connects residues cysteine 267 and cysteine 281. Arginine 272 contacts xyloglucan.

It belongs to the glycosyl hydrolase 16 family. XTH group 2 subfamily. Contains at least one intrachain disulfide bond essential for its enzymatic activity. Root specific.

It is found in the secreted. The protein localises to the cell wall. Its subcellular location is the extracellular space. It localises to the apoplast. It carries out the reaction breaks a beta-(1-&gt;4) bond in the backbone of a xyloglucan and transfers the xyloglucanyl segment on to O-4 of the non-reducing terminal glucose residue of an acceptor, which can be a xyloglucan or an oligosaccharide of xyloglucan.. Its function is as follows. Catalyzes xyloglucan endohydrolysis (XEH) and/or endotransglycosylation (XET). Cleaves and religates xyloglucan polymers, an essential constituent of the primary cell wall, and thereby participates in cell wall construction of growing tissues. The sequence is that of Probable xyloglucan endotransglucosylase/hydrolase protein 18 (XTH18) from Arabidopsis thaliana (Mouse-ear cress).